The following is a 446-amino-acid chain: Maltoporin (446 aa).

A signal peptide spans 1–25 (MMITLRKLPLAVAVAAGVMSAQAMA).

This sequence belongs to the porin LamB (TC 1.B.3) family. Homotrimer formed of three 18-stranded antiparallel beta-barrels, containing three independent channels.

It localises to the cell outer membrane. It catalyses the reaction beta-maltose(in) = beta-maltose(out). Involved in the transport of maltose and maltodextrins. The sequence is that of Maltoporin from Escherichia coli O8 (strain IAI1).